A 492-amino-acid chain; its full sequence is NADH-quinone oxidoreductase subunit N (492 aa).

14 helical membrane-spanning segments follow: residues 18–38 (ILPM…NAFT), 45–65 (LNMF…LGLE), 80–100 (LSLV…FLAL), 108–128 (FQTA…QFMV), 133–153 (LLLM…LMAL), 167–187 (FTMG…FYLL), 209–229 (MLFA…VSLV), 250–270 (ISIV…GAFI), 277–297 (VEDI…LIAL), 305–325 (MLAY…FIHT), 333–353 (FVYW…LWLL), 381–401 (VAIL…FSVF), 415–435 (NHIL…FYYF), and 464–484 (MPIY…VFMM).

This sequence belongs to the complex I subunit 2 family. NDH-1 is composed of 14 different subunits. Subunits NuoA, H, J, K, L, M, N constitute the membrane sector of the complex.

Its subcellular location is the cell inner membrane. It catalyses the reaction a quinone + NADH + 5 H(+)(in) = a quinol + NAD(+) + 4 H(+)(out). Its function is as follows. NDH-1 shuttles electrons from NADH, via FMN and iron-sulfur (Fe-S) centers, to quinones in the respiratory chain. The immediate electron acceptor for the enzyme in this species is believed to be ubiquinone. Couples the redox reaction to proton translocation (for every two electrons transferred, four hydrogen ions are translocated across the cytoplasmic membrane), and thus conserves the redox energy in a proton gradient. The protein is NADH-quinone oxidoreductase subunit N of Helicobacter acinonychis (strain Sheeba).